A 373-amino-acid polypeptide reads, in one-letter code: DNA dC-&gt;dU-editing enzyme APOBEC-3F (373 aa).

CMP/dCMP-type deaminase domains follow at residues Arg-29–Leu-137 and Asp-174–Leu-321. A (Microbial infection) Glycyl lysine isopeptide (Lys-Gly) (interchain with G-Cter in ubiquitin) cross-link involves residue Lys-52. Zn(2+) contacts are provided by His-65, Cys-96, and Cys-99. Residue Lys-234 forms a (Microbial infection) Glycyl lysine isopeptide (Lys-Gly) (interchain with G-Cter in ubiquitin) linkage. His-249 contacts Zn(2+). Residue Glu-251 is the Proton donor of the active site. Zn(2+) is bound by residues Cys-280 and Cys-283. Cysteines 280 and 283 form a disulfide. Residues Lys-334, Lys-352, Lys-355, and Lys-358 each participate in a (Microbial infection) Glycyl lysine isopeptide (Lys-Gly) (interchain with G-Cter in ubiquitin) cross-link.

The protein belongs to the cytidine and deoxycytidylate deaminase family. In terms of assembly, homodimer. Interacts with APOBEC3G in an RNA-dependent manner. Interacts with AGO1, AGO2 and AGO3. (Microbial infection) Interacts with HIV-1 Vif, leading to its ubiquitination and degradation by the proteasome. In the absence of Vif protein, specifically packaged into HIV-1 virions. Zn(2+) is required as a cofactor. (Microbial infection) Following infection by HIV-1, ubiquitinated by a cullin-5-RING E3 ubiquitin-protein ligase complex (ECS complex) hijacked by the HIV-1 Vif protein, leading to its degradation. In terms of tissue distribution, widely expressed. Highly expressed in ovary.

It localises to the cytoplasm. The protein localises to the P-body. It carries out the reaction a 2'-deoxycytidine in single-stranded DNA + H2O + H(+) = a 2'-deoxyuridine in single-stranded DNA + NH4(+). Its activity is regulated as follows. (Microbial infection) Antiviral activity is neutralized by the HIV-1 virion infectivity factor (Vif), that prevents its incorporation into progeny virions by both inhibiting its translation and/or by inducing its ubiquitination and subsequent degradation by the 26S proteasome. DNA deaminase (cytidine deaminase) which acts as an inhibitor of retrovirus replication and retrotransposon mobility via deaminase-dependent and -independent mechanisms. Exhibits antiviral activity against viruse such as HIV-1 or HIV-2. After the penetration of retroviral nucleocapsids into target cells of infection and the initiation of reverse transcription, it can induce the conversion of cytosine to uracil in the minus-sense single-strand viral DNA, leading to G-to-A hypermutations in the subsequent plus-strand viral DNA. The resultant detrimental levels of mutations in the proviral genome, along with a deamination-independent mechanism that works prior to the proviral integration, together exert efficient antiretroviral effects in infected target cells. Selectively targets single-stranded DNA and does not deaminate double-stranded DNA or single- or double-stranded RNA. Exhibits antiviral activity also against hepatitis B virus (HBV), equine infectious anemia virus (EIAV), xenotropic MuLV-related virus (XMRV) and simian foamy virus (SFV) and may inhibit the mobility of LTR and non-LTR retrotransposons. May also play a role in the epigenetic regulation of gene expression through the process of active DNA demethylation. The sequence is that of DNA dC-&gt;dU-editing enzyme APOBEC-3F from Homo sapiens (Human).